The following is a 164-amino-acid chain: Anterior gradient protein 3 (164 aa).

The N-terminal stretch at 1–19 is a signal peptide; the sequence is MYFPMIELTLVLLASSNLA. Residues 161-164 carry the Prevents secretion from ER motif; sequence QTEL.

Belongs to the AGR family.

It is found in the endoplasmic reticulum. The protein localises to the cytoplasm. Functionally, required for calcium-mediated regulation of ciliary beat frequency in the airway. This is Anterior gradient protein 3 from Xenopus tropicalis (Western clawed frog).